Here is a 134-residue protein sequence, read N- to C-terminus: MGMLKEFKEFAVKGNVVDMAVGIIIGVAFGKIVSSFVSDVIMPPLGLLIGGVDFSDLAITLQHAGEGVAEVTLRYGVFLQAIFDFIIIAFAIFIAVKAINTLKKKEEAAPPPAPPEPSSEEKLLAEIRDLLKQK.

The next 2 membrane-spanning stretches (helical) occupy residues 16 to 36 (VVDM…VSSF) and 76 to 96 (GVFL…FIAV).

This sequence belongs to the MscL family. As to quaternary structure, homopentamer.

Its subcellular location is the cell inner membrane. Functionally, channel that opens in response to stretch forces in the membrane lipid bilayer. May participate in the regulation of osmotic pressure changes within the cell. The chain is Large-conductance mechanosensitive channel from Thioalkalivibrio sulfidiphilus (strain HL-EbGR7).